The chain runs to 163 residues: Protein MATERNALLY EXPRESSED GENE 5 (163 aa).

The RRM domain occupies 38–117; the sequence is STLYIEGLPA…DDVNVSAPAE (80 aa). Intrachain disulfides connect Cys140–Cys162 and Cys143–Cys151.

This sequence belongs to the MEG family. In terms of tissue distribution, ubiquitous.

In Zea mays (Maize), this protein is Protein MATERNALLY EXPRESSED GENE 5 (MEG5).